The chain runs to 313 residues: tRNA dimethylallyltransferase (313 aa).

Residue 11-18 coordinates ATP; it reads GPTACGKT. A substrate-binding site is contributed by 13–18; that stretch reads TACGKT. Interaction with substrate tRNA stretches follow at residues 36-39, 160-164, and 243-248; these read DSAL, QRIGR, and RCVGYR.

It belongs to the IPP transferase family. Monomer. Mg(2+) serves as cofactor.

It catalyses the reaction adenosine(37) in tRNA + dimethylallyl diphosphate = N(6)-dimethylallyladenosine(37) in tRNA + diphosphate. In terms of biological role, catalyzes the transfer of a dimethylallyl group onto the adenine at position 37 in tRNAs that read codons beginning with uridine, leading to the formation of N6-(dimethylallyl)adenosine (i(6)A). In Neisseria gonorrhoeae (strain ATCC 700825 / FA 1090), this protein is tRNA dimethylallyltransferase.